A 1235-amino-acid chain; its full sequence is Gem-associated protein 5 (1235 aa).

The WD 1 repeat unit spans residues 55-102 (STRINILALDVSPMWGLGNGGPTKPFAIVGDDLSVQVWDCALGEAVIG). The segment at 227–263 (NNLALSAEEWRSRNGGQEEKPKTKPPPLTKSKAAESD) is disordered. Basic and acidic residues predominate over residues 234–248 (EEWRSRNGGQEEKPK). 4 positions are modified to phosphoserine: Ser289, Ser290, Ser351, and Ser354. The tract at residues 340–368 (DCEPTKPTGPLSDASTISNKNDASDSTEG) is disordered. A compositionally biased stretch (polar residues) spans 352–368 (DASTISNKNDASDSTEG). Thr355 bears the Phosphothreonine mark. Position 357 is a phosphoserine (Ser357). Phosphothreonine is present on Thr411. WD repeat units follow at residues 428 to 469 (ISAE…HAGK), 475 to 512 (KTAGKLNNVYWLNNHVIVSLSRHQLFFWSVEFERKMLR), 565 to 605 (TVAF…TSCL), 611 to 650 (YVSSNVYCLAWSPNCLELAFGTFDGTVGILDVERMKVKTH), 690 to 730 (TIVN…EKSW), 739 to 779 (LFAR…RNWK), and 788 to 828 (TEKA…KPPL). Residues 443–447 (LETLL) carry the LXXLL motif motif. Residues 963–980 (KEQNNRSAKECPKCKEQS) show a composition bias toward basic and acidic residues. Positions 963–983 (KEQNNRSAKECPKCKEQSPDS) are disordered.

As to quaternary structure, component of the core survival motor neuron (SMN) complex composed of Smn, Gem2, Gem3, rig/Gem5 and one of 3 almost identical Gem4 paralogs encoded by Glos/Gem4a, Gem4b or Gem4c. Interacts with nuclear receptors EcR, svp (seven up), usp (ultraspiracle), Hr39 and Hr3. In terms of tissue distribution, expressed in the brain and salivary glands of early and late second instar larvae. Expressed in nurse cells and oocytes.

The protein localises to the nucleus. It is found in the cytoplasm. It localises to the U-body. Its subcellular location is the gem. Its function is as follows. Component of the survival motor neuron (SMN) complex that catalyzes the assembly of small nuclear ribonucleoproteins (snRNPs), the building blocks of the spliceosome, and thereby plays an important role in the splicing of cellular pre-mRNAs. Nuclear receptor cofactor for the ecdysone-regulated processes of molting and puparium formation. Acts downstream from ecdysone biosynthesis and release to control the expression of specific ecdysone-regulated genes such as Eip74EF (E74). Essential in muscle and neuronal tissues for motor function, including climbing ability and flight. In Drosophila melanogaster (Fruit fly), this protein is Gem-associated protein 5.